The following is a 216-amino-acid chain: Uracil phosphoribosyltransferase (216 aa).

30 to 34 (KNLVR) is a binding site for GTP. 5-phospho-alpha-D-ribose 1-diphosphate is bound by residues Arg-80, Arg-105, and 140–148 (DPMIATAST). Uracil is bound by residues Ile-203 and 208-210 (GDA). Asp-209 contributes to the 5-phospho-alpha-D-ribose 1-diphosphate binding site.

It belongs to the UPRTase family. Requires Mg(2+) as cofactor.

The enzyme catalyses UMP + diphosphate = 5-phospho-alpha-D-ribose 1-diphosphate + uracil. The protein operates within pyrimidine metabolism; UMP biosynthesis via salvage pathway; UMP from uracil: step 1/1. Its activity is regulated as follows. Allosterically activated by GTP. Catalyzes the conversion of uracil and 5-phospho-alpha-D-ribose 1-diphosphate (PRPP) to UMP and diphosphate. This chain is Uracil phosphoribosyltransferase, found in Saccharolobus islandicus (strain M.16.4 / Kamchatka #3) (Sulfolobus islandicus).